Here is a 371-residue protein sequence, read N- to C-terminus: UDP-N-acetylglucosamine--N-acetylmuramyl-(pentapeptide) pyrophosphoryl-undecaprenol N-acetylglucosamine transferase (371 aa).

Residues 10 to 12 (TGG), N122, R166, S196, and Q301 contribute to the UDP-N-acetyl-alpha-D-glucosamine site.

This sequence belongs to the glycosyltransferase 28 family. MurG subfamily.

It localises to the cell inner membrane. The enzyme catalyses di-trans,octa-cis-undecaprenyl diphospho-N-acetyl-alpha-D-muramoyl-L-alanyl-D-glutamyl-meso-2,6-diaminopimeloyl-D-alanyl-D-alanine + UDP-N-acetyl-alpha-D-glucosamine = di-trans,octa-cis-undecaprenyl diphospho-[N-acetyl-alpha-D-glucosaminyl-(1-&gt;4)]-N-acetyl-alpha-D-muramoyl-L-alanyl-D-glutamyl-meso-2,6-diaminopimeloyl-D-alanyl-D-alanine + UDP + H(+). It participates in cell wall biogenesis; peptidoglycan biosynthesis. Cell wall formation. Catalyzes the transfer of a GlcNAc subunit on undecaprenyl-pyrophosphoryl-MurNAc-pentapeptide (lipid intermediate I) to form undecaprenyl-pyrophosphoryl-MurNAc-(pentapeptide)GlcNAc (lipid intermediate II). The protein is UDP-N-acetylglucosamine--N-acetylmuramyl-(pentapeptide) pyrophosphoryl-undecaprenol N-acetylglucosamine transferase of Halothermothrix orenii (strain H 168 / OCM 544 / DSM 9562).